The following is a 326-amino-acid chain: Sucrose operon repressor (326 aa).

Residues Met1–Gly57 enclose the HTH lacI-type domain. A DNA-binding region (H-T-H motif) is located at residues Leu5–Asn24.

Functionally, negative regulator of scrB expression. The sequence is that of Sucrose operon repressor (scrR) from Pediococcus pentosaceus.